A 248-amino-acid polypeptide reads, in one-letter code: Probable septum site-determining protein MinC (248 aa).

The disordered stretch occupies residues 94-125; sequence GMPPAMRGGQPAADFEAPAGEPQANPGAPEPQ.

The protein belongs to the MinC family. Interacts with MinD and FtsZ.

Cell division inhibitor that blocks the formation of polar Z ring septums. Rapidly oscillates between the poles of the cell to destabilize FtsZ filaments that have formed before they mature into polar Z rings. Prevents FtsZ polymerization. The polypeptide is Probable septum site-determining protein MinC (Brucella abortus (strain S19)).